A 222-amino-acid polypeptide reads, in one-letter code: Triosephosphate isomerase (222 aa).

Residue 9–11 (NYK) coordinates substrate. The Electrophile role is filled by H93. E141 serves as the catalytic Proton acceptor. Substrate contacts are provided by residues I146, G181, and 202 to 203 (AS).

It belongs to the triosephosphate isomerase family. In terms of assembly, homotetramer; dimer of dimers.

Its subcellular location is the cytoplasm. It carries out the reaction D-glyceraldehyde 3-phosphate = dihydroxyacetone phosphate. The protein operates within carbohydrate biosynthesis; gluconeogenesis. Its pathway is carbohydrate degradation; glycolysis; D-glyceraldehyde 3-phosphate from glycerone phosphate: step 1/1. Involved in the gluconeogenesis. Catalyzes stereospecifically the conversion of dihydroxyacetone phosphate (DHAP) to D-glyceraldehyde-3-phosphate (G3P). This chain is Triosephosphate isomerase, found in Methanosarcina barkeri (strain Fusaro / DSM 804).